We begin with the raw amino-acid sequence, 370 residues long: MRADTADYPQLFLEDVPMMDTRAPVEFAGGAFPNVLNLPLMTDSERQKVGTCYKQHGQRAAIELGHRLVSGRTKELRIQAWADFARAHPEGYLYCFRGGLRSQIVQQWLRDEAGIDYPRVTGGYKAMRNFLLDTTRQATAQCAFVLVGGLTGTGKTEVIAALGNALDLEGHANHRGSSFGKRATPQPAQIDFENRLAIDILRKRAAGVGRFVLEDESRLVGSCSLPLELHQGMQRYPLVWLEDSFEGRVERILRDYVVDLCAEFVAVEGPQAGFAAFAARLTQSLANIVKRLGGERYQRLSTLMARALAEQEAGRGVALHRDWIVGLLREYYDPMYAYQRESKAERIVFSGDREAVLAYLRECAAGAVDG.

The 125-residue stretch at 12–136 (FLEDVPMMDT…MRNFLLDTTR (125 aa)) folds into the Rhodanese domain. The S-selanylcysteine intermediate role is filled by Cys-95.

The protein belongs to the SelU family. As to quaternary structure, monomer.

The catalysed reaction is 5-methylaminomethyl-2-thiouridine(34) in tRNA + selenophosphate + (2E)-geranyl diphosphate + H2O + H(+) = 5-methylaminomethyl-2-selenouridine(34) in tRNA + (2E)-thiogeraniol + phosphate + diphosphate. It carries out the reaction 5-methylaminomethyl-2-thiouridine(34) in tRNA + (2E)-geranyl diphosphate = 5-methylaminomethyl-S-(2E)-geranyl-thiouridine(34) in tRNA + diphosphate. The enzyme catalyses 5-methylaminomethyl-S-(2E)-geranyl-thiouridine(34) in tRNA + selenophosphate + H(+) = 5-methylaminomethyl-2-(Se-phospho)selenouridine(34) in tRNA + (2E)-thiogeraniol. It catalyses the reaction 5-methylaminomethyl-2-(Se-phospho)selenouridine(34) in tRNA + H2O = 5-methylaminomethyl-2-selenouridine(34) in tRNA + phosphate. In terms of biological role, involved in the post-transcriptional modification of the uridine at the wobble position (U34) of tRNA(Lys), tRNA(Glu) and tRNA(Gln). Catalyzes the conversion of 2-thiouridine (S2U-RNA) to 2-selenouridine (Se2U-RNA). Acts in a two-step process involving geranylation of 2-thiouridine (S2U) to S-geranyl-2-thiouridine (geS2U) and subsequent selenation of the latter derivative to 2-selenouridine (Se2U) in the tRNA chain. This Azotobacter vinelandii (strain DJ / ATCC BAA-1303) protein is tRNA 2-selenouridine synthase.